A 398-amino-acid chain; its full sequence is Serpin-Z1C (398 aa).

Residues 343-367 (GTEAAASTAIKMALLQARPPSVMDF) are RCL.

Belongs to the serpin family.

Inhibits chymotrypsin and cathepsin G in vitro. In Triticum aestivum (Wheat), this protein is Serpin-Z1C.